Reading from the N-terminus, the 935-residue chain is Isoleucine--tRNA ligase (935 aa).

A 'HIGH' region motif is present at residues 58-68 (PYANGSIHVGH). An L-isoleucyl-5'-AMP-binding site is contributed by glutamate 558. Positions 599-603 (KMSKS) match the 'KMSKS' region motif. Lysine 602 serves as a coordination point for ATP. Residues cysteine 897, cysteine 900, cysteine 917, and cysteine 920 each contribute to the Zn(2+) site.

The protein belongs to the class-I aminoacyl-tRNA synthetase family. IleS type 1 subfamily. In terms of assembly, monomer. The cofactor is Zn(2+).

Its subcellular location is the cytoplasm. It carries out the reaction tRNA(Ile) + L-isoleucine + ATP = L-isoleucyl-tRNA(Ile) + AMP + diphosphate. Catalyzes the attachment of isoleucine to tRNA(Ile). As IleRS can inadvertently accommodate and process structurally similar amino acids such as valine, to avoid such errors it has two additional distinct tRNA(Ile)-dependent editing activities. One activity is designated as 'pretransfer' editing and involves the hydrolysis of activated Val-AMP. The other activity is designated 'posttransfer' editing and involves deacylation of mischarged Val-tRNA(Ile). The protein is Isoleucine--tRNA ligase of Francisella tularensis subsp. novicida (strain U112).